A 703-amino-acid polypeptide reads, in one-letter code: Centrosomal protein of 63 kDa (703 aa).

An N-acetylmethionine modification is found at methionine 1. Coiled-coil stretches lie at residues 22–199 (EAEL…ESVE), 242–306 (MTVL…QHAV), 353–533 (LEGS…STQM), and 676–703 (HILE…TALK). The residue at position 278 (serine 278) is a Phosphoserine.

This sequence belongs to the CEP63 family. In terms of assembly, interacts with CEP152 and CDK1; these interactions recruit both ligands to centrosomes. Interacts with CDK2, CDK5RAP2, WDR62, CEP90, KIAA0753/moonraker and CCDC14. CEP63, CDK5RAP2, CEP152, WDR62 are proposed to form a stepwise assembled complex at the centrosome forming a ring near parental centrioles. Interacts with CCDC57; the interaction is required for their location to proximal end of centrioles. Interacts with FXR1; promoting its stabilization. As to quaternary structure, (Microbial infection) Interacts with zika virus serine protease NS3; this interaction disorganizes the centrosome. Post-translationally, polyubiquitinated via 'Lys-48'-linked ubiquitin, leading to its degradation. Deubiquitinated by USP36, promoting its stabilization.

The protein localises to the cytoplasm. It is found in the cytoskeleton. It localises to the microtubule organizing center. Its subcellular location is the centrosome. The protein resides in the centriole. The protein localises to the centriolar satellite. Functionally, required for normal spindle assembly. Plays a key role in mother-centriole-dependent centriole duplication; the function seems also to involve CEP152, CDK5RAP2 and WDR62 through a stepwise assembled complex at the centrosome that recruits CDK2 required for centriole duplication. Reported to be required for centrosomal recruitment of CEP152; however, this function has been questioned. Also recruits CDK1 to centrosomes. Plays a role in DNA damage response. Following DNA damage, such as double-strand breaks (DSBs), is removed from centrosomes; this leads to the inactivation of spindle assembly and delay in mitotic progression. Promotes stabilization of FXR1 protein by inhibiting FXR1 ubiquitination. The protein is Centrosomal protein of 63 kDa of Homo sapiens (Human).